The following is a 212-amino-acid chain: Nucleoside diphosphate kinase homolog 5 (212 aa).

The segment at 13–145 is NDK; that stretch reads EKTLAIIKPD…EREIRFMFPE (133 aa).

This sequence belongs to the NDK family. Component of the axonemal radial spoke complex 1 (RS1), at least composed of spoke head proteins RSPH1, RSPH3, RSPH9 and the cilia-specific component RSPH4A or sperm-specific component RSPH6A, spoke stalk proteins RSPH14, DNAJB13, DYDC1, ROPN1L and NME5, and the anchor protein IQUB. Interacts with IQUB. In terms of tissue distribution, specifically expressed in testis germinal cells.

Its subcellular location is the cell projection. The protein localises to the cilium. The protein resides in the cytoplasm. It is found in the cytoskeleton. It localises to the flagellum axoneme. Functions as part of axonemal radial spoke complexes that play an important part in the motility of sperm and cilia. Does not seem to have nucleoside diphosphate kinase (NDPK) activity. Confers protection from cell death by BAX and alters the cellular levels of several antioxidant enzymes including GPX5. May play a role in spermiogenesis by increasing the ability of late-stage spermatids to eliminate reactive oxygen species. Exhibits a 3'-5' exonuclease activity with a preference for single-stranded DNA, suggesting roles in DNA proofreading and repair. In Homo sapiens (Human), this protein is Nucleoside diphosphate kinase homolog 5.